We begin with the raw amino-acid sequence, 40 residues long: Plasma membrane ATPase proteolipid 1 (40 aa).

A propeptide spanning residues 1–2 (MT) is cleaved from the precursor. A helical transmembrane segment spans residues 3-26 (LPGGVILVFILVGLACIAIIATII). Residues 27 to 40 (YRKWQARQRGLQRF) lie on the Cytoplasmic side of the membrane.

In terms of assembly, monomer and homodimer. Associated with the 100 kDa subunit of the plasma membrane H(+)-ATPase.

The protein resides in the cell membrane. In Saccharomyces cerevisiae (strain ATCC 204508 / S288c) (Baker's yeast), this protein is Plasma membrane ATPase proteolipid 1 (PMP1).